The primary structure comprises 2131 residues: Protein Ycf2 (2131 aa).

1466 to 1473 (GSIGTGRS) contributes to the ATP binding site.

It belongs to the Ycf2 family.

It localises to the plastid. It is found in the chloroplast stroma. In terms of biological role, probable ATPase of unknown function. Its presence in a non-photosynthetic plant (Epifagus virginiana) and experiments in tobacco indicate that it has an essential function which is probably not related to photosynthesis. This chain is Protein Ycf2, found in Helianthus annuus (Common sunflower).